Consider the following 104-residue polypeptide: Integration host factor subunit alpha (104 aa).

The tract at residues 51-70 is disordered; that stretch reads GNFQLRDKPQRPGRNPKTGE.

The protein belongs to the bacterial histone-like protein family. Heterodimer of an alpha and a beta chain.

Functionally, this protein is one of the two subunits of integration host factor, a specific DNA-binding protein that functions in genetic recombination as well as in transcriptional and translational control. The polypeptide is Integration host factor subunit alpha (Ralstonia nicotianae (strain ATCC BAA-1114 / GMI1000) (Ralstonia solanacearum)).